The following is a 362-amino-acid chain: MNTFGTRLKFTSFGESHGVAVGCIIDGMPAGVKFDEEFLQNELDKRKGGSKFATPRKESDKAQVLSGVFEGYTTGHPIAIVVFNENAHSKDYDNLKDLFRPAHADFTYFYKYGIRDHRGGGRSSARESVARVAGGAVAAMLLREFDICVQSGVFGVGTFVSNLKEEEFDFEFAKKSEIFCLDPKLESDFKNEILNARNSKDSVGAAVFTKVSGMLVGLGEVLYDKLDSKLAHALMGVNAVKAVEIGEGINASKMRGSCNNDALKDGKFLSNHSGGILGGISNGENLILKTYFKPTPSIFAKQESIDKFGNNLEFELKGRHDPCVGVRGSVVASAMVRLVLADCLLLNTSANLNNLKNAYGLK.

Residue Arg-46 participates in NADP(+) binding. FMN contacts are provided by residues 122–124, 238–239, Gly-278, 293–297, and Arg-319; these read RSS, NA, and KPTPS.

Belongs to the chorismate synthase family. Homotetramer. Requires FMNH2 as cofactor.

It carries out the reaction 5-O-(1-carboxyvinyl)-3-phosphoshikimate = chorismate + phosphate. Its pathway is metabolic intermediate biosynthesis; chorismate biosynthesis; chorismate from D-erythrose 4-phosphate and phosphoenolpyruvate: step 7/7. Catalyzes the anti-1,4-elimination of the C-3 phosphate and the C-6 proR hydrogen from 5-enolpyruvylshikimate-3-phosphate (EPSP) to yield chorismate, which is the branch point compound that serves as the starting substrate for the three terminal pathways of aromatic amino acid biosynthesis. This reaction introduces a second double bond into the aromatic ring system. The chain is Chorismate synthase from Campylobacter jejuni (strain RM1221).